We begin with the raw amino-acid sequence, 411 residues long: Protein phosphatase 1 regulatory subunit 36 (411 aa).

In terms of assembly, interacts with PPP1CA.

Functionally, inhibits phosphatase activity of protein phosphatase 1 (PP1) complexes. The protein is Protein phosphatase 1 regulatory subunit 36 (Ppp1r36) of Rattus norvegicus (Rat).